The primary structure comprises 1106 residues: DNA polymerase delta catalytic subunit (1106 aa).

The segment at 1–28 (MDGKRRPGPGPGVPPKRARGGLWDEDEA) is disordered. The Nuclear localization signal signature appears at 4 to 19 (KRRPGPGPGVPPKRAR). Position 19 is an omega-N-methylarginine (Arg-19). A Glycyl lysine isopeptide (Lys-Gly) (interchain with G-Cter in SUMO2) cross-link involves residue Lys-573. The Zn(2+) site is built by Cys-1011, Cys-1014, Cys-1025, and Cys-1028. A CysA-type zinc finger spans residues 1011 to 1028 (CIGCRTVLSHQGAVCKFC). 4 residues coordinate [4Fe-4S] cluster: Cys-1057, Cys-1060, Cys-1070, and Cys-1075. The short motif at 1057 to 1075 (CQRCQGSLHEDVICTSRDC) is the CysB motif element.

This sequence belongs to the DNA polymerase type-B family. In terms of assembly, component of the tetrameric DNA polymerase delta complex (Pol-delta4), which consists of POLD1/p125, POLD2/p50, POLD3/p66/p68 and POLD4/p12, with POLD1 bearing both DNA polymerase and 3' to 5' proofreading exonuclease activities. Within Pol-delta4, directly interacts with POLD2 and POLD4. Following genotoxic stress by DNA-damaging agents, such as ultraviolet light and methyl methanesulfonate, or by replication stress induced by treatment with hydroxyurea or aphidicolin, Pol-delta4 is converted into a trimeric form of the complex (Pol-delta3) by POLD4 degradation. Pol-delta3 is the major form at S phase replication sites and DNA damage sites. POLD1 displays different catalytic properties depending upon the complex it is found in. It exhibits higher proofreading activity and fidelity than Pol-delta4, making it particularly well suited to respond to DNA damage. Directly interacts with PCNA, as do POLD3 and POLD4; this interaction stimulates Pol-delta4 polymerase activity. As POLD2 and POLD4, directly interacts with WRNIP1; this interaction stimulates DNA polymerase delta-mediated DNA synthesis, independently of the presence of PCNA. This stimulation may be due predominantly to an increase of initiation frequency and also to increased processivity. Also observed as a dimeric complex with POLD2 (Pol-delta2). Pol-delta2 is relatively insensitive to the PCNA stimulation (2-5-fold) compared to Pol-delta4 that is stimulated by over 50-fold. Interacts with POLDIP2; this interaction is indirect and most probably mediated through POLD2-binding. Interacts with CIAO1. Interacts with POLDIP2. Interacts with RFC1. Requires [4Fe-4S] cluster as cofactor.

The protein resides in the nucleus. The catalysed reaction is DNA(n) + a 2'-deoxyribonucleoside 5'-triphosphate = DNA(n+1) + diphosphate. With respect to regulation, regulated by alteration of quaternary structure. Exhibits burst rates of DNA synthesis are about 5 times faster in the presence of POLD4 (Pol-delta4 complex) than in its absence (Pol-delta3 complex), while the affinity of the enzyme for its DNA and dNTP substrates appears unchanged. The Pol-delta3 complex is more likely to proofread DNA synthesis because it cleaves single-stranded DNA twice as fast and transfers mismatched DNA from the polymerase to the exonuclease sites 9 times faster compared to the Pol-delta3 complex. Pol-delta3 also extends mismatched primers 3 times more slowly in the absence of POLD4. The conversion of Pol-delta4 into Pol-delta3 is induced by genotoxic stress or by replication stress leading POLD4 degradation. Stimulated in the presence of PCNA. This stimulation is further increased in the presence of KCTD13/PDIP1, most probably via direct interaction between KCTD13 and POLD2. In terms of biological role, as the catalytic component of the trimeric (Pol-delta3 complex) and tetrameric DNA polymerase delta complexes (Pol-delta4 complex), plays a crucial role in high fidelity genome replication, including in lagging strand synthesis, and repair. Exhibits both DNA polymerase and 3'- to 5'-exonuclease activities. Requires the presence of accessory proteins POLD2, POLD3 and POLD4 for full activity. Depending upon the absence (Pol-delta3) or the presence of POLD4 (Pol-delta4), displays differences in catalytic activity. Most notably, expresses higher proofreading activity in the context of Pol-delta3 compared with that of Pol-delta4. Although both Pol-delta3 and Pol-delta4 process Okazaki fragments in vitro, Pol-delta3 may be better suited to fulfill this task, exhibiting near-absence of strand displacement activity compared to Pol-delta4 and stalling on encounter with the 5'-blocking oligonucleotides. Pol-delta3 idling process may avoid the formation of a gap, while maintaining a nick that can be readily ligated. Along with DNA polymerase kappa, DNA polymerase delta carries out approximately half of nucleotide excision repair (NER) synthesis following UV irradiation. Under conditions of DNA replication stress, in the presence of POLD3 and POLD4, may catalyze the repair of broken replication forks through break-induced replication (BIR). Involved in the translesion synthesis (TLS) of templates carrying O6-methylguanine, 8oxoG or abasic sites. The polypeptide is DNA polymerase delta catalytic subunit (POLD1) (Bos taurus (Bovine)).